The chain runs to 244 residues: L-xylulose reductase (244 aa).

The residue at position 1 (methionine 1) is an N-acetylmethionine. 11-39 (LVTGAGKGIGRSTVLALKAAGAQVVAVSR) is a binding site for NADP(+). Arginine 21 carries the omega-N-methylarginine modification. Residue serine 136 participates in substrate binding. Residue tyrosine 149 is the Proton acceptor of the active site. Lysine 153 is a catalytic residue.

Belongs to the short-chain dehydrogenases/reductases (SDR) family. In terms of assembly, homotetramer. In terms of tissue distribution, highly expressed in kidney, liver and epididymis. Expressed at intermediate level in lung. Weakly or not expressed in brain, heart, spleen and testis.

Its subcellular location is the membrane. The protein localises to the apical cell membrane. It catalyses the reaction xylitol + NADP(+) = L-xylulose + NADPH + H(+). Its function is as follows. Catalyzes the NADPH-dependent reduction of several pentoses, tetroses, trioses, alpha-dicarbonyl compounds and L-xylulose. Participates in the uronate cycle of glucose metabolism. May play a role in the water absorption and cellular osmoregulation in the proximal renal tubules by producing xylitol, an osmolyte, thereby preventing osmolytic stress from occurring in the renal tubules. The chain is L-xylulose reductase (Dcxr) from Mus musculus (Mouse).